The chain runs to 324 residues: MIFSKISQVAHYVPQQLVTNNDLANIMDTSHEWIFSRTGIAERHISRDEMTSDLAIQVADQLLTQSGLKADAIDFIIVATISPDATMPSTAAKVQAAIAATSAFAFDMTAACSGFVFALAMADKLIASGAYQNGMVIGAETLSKLVNWQDRATAVLFGDGAGGVLLEASKDKHVLAETLHTDGARCQSLISGETSLSSPYSIGKKAIATIQMDGRAIFDFAIRDVSKSILTLMAQSDITKDDIDYCLLHQANRRILDKIARKIDVPREKFLENMMRYGNTSAASIPILLSEAVQKGQIRLDGTQKILLSGFGGGLTWGSLIVKI.

Residues cysteine 112 and histidine 249 contribute to the active site. The ACP-binding stretch occupies residues glutamine 250–arginine 254. Asparagine 279 is an active-site residue.

This sequence belongs to the thiolase-like superfamily. FabH family. In terms of assembly, homodimer.

The protein localises to the cytoplasm. The enzyme catalyses malonyl-[ACP] + acetyl-CoA + H(+) = 3-oxobutanoyl-[ACP] + CO2 + CoA. The protein operates within lipid metabolism; fatty acid biosynthesis. Its function is as follows. Catalyzes the condensation reaction of fatty acid synthesis by the addition to an acyl acceptor of two carbons from malonyl-ACP. Catalyzes the first condensation reaction which initiates fatty acid synthesis and may therefore play a role in governing the total rate of fatty acid production. Possesses both acetoacetyl-ACP synthase and acetyl transacylase activities. Its substrate specificity determines the biosynthesis of branched-chain and/or straight-chain of fatty acids. This is Beta-ketoacyl-[acyl-carrier-protein] synthase III from Streptococcus pyogenes serotype M4 (strain MGAS10750).